Consider the following 473-residue polypeptide: 3-isopropylmalate dehydratase large subunit (473 aa).

Residues Cys351, Cys414, and Cys417 each coordinate [4Fe-4S] cluster.

This sequence belongs to the aconitase/IPM isomerase family. LeuC type 1 subfamily. In terms of assembly, heterodimer of LeuC and LeuD. Requires [4Fe-4S] cluster as cofactor.

The catalysed reaction is (2R,3S)-3-isopropylmalate = (2S)-2-isopropylmalate. It functions in the pathway amino-acid biosynthesis; L-leucine biosynthesis; L-leucine from 3-methyl-2-oxobutanoate: step 2/4. Functionally, catalyzes the isomerization between 2-isopropylmalate and 3-isopropylmalate, via the formation of 2-isopropylmaleate. In Polaromonas sp. (strain JS666 / ATCC BAA-500), this protein is 3-isopropylmalate dehydratase large subunit.